A 131-amino-acid polypeptide reads, in one-letter code: Maturin (131 aa).

At Tyr34 the chain carries Phosphotyrosine. Residues Phe107–Glu120 show a composition bias toward acidic residues. The disordered stretch occupies residues Phe107–Gln131.

Belongs to the MTURN family. Post-translationally, phosphorylation at Tyr-34 is essential for its ability to promote megakaryocyte differentiation.

It localises to the cytoplasm. Promotes megakaryocyte differentiation by enhancing ERK and JNK signaling as well as up-regulating RUNX1 and FLI1 expression. Represses NF-kappa-B transcriptional activity by inhibiting phosphorylation of RELA at 'Ser- 536'. May be involved in early neuronal development. In Bos taurus (Bovine), this protein is Maturin (MTURN).